A 432-amino-acid polypeptide reads, in one-letter code: MAKNVVVIGAQWGDEGKGKIVDWLAEEAGGVVRFQGGHNAGHTLVVGGKKTILRLIPSGILHESLDCFIGSGVVVSPEALLGEIDELNAAGVKNVEGRLKIAPTCPLILPYHIALDQAREASRGKGKIGTTGRGIGPAYEDKVARRAIRAADLLHPEKLREKLDAVLAYYNVQLQHLHNAEPVKAEDVMAVIEKVAPRIAPMITDVSRVLNEKNKNGEKLLFEGAQGALLDIDYGTYPFVTSSNCLAGAASAGAGVGPQMLDYVLGIVKAYTTRVGSGPFPTELFDEVGAGLAERGHEFGSVTGRARRCGWFDAAALKRSIQINGISGMCITKLDVMDGVETINICVGYELPDGGKTDILPCGSDAVETCKPIYETMEGWKESTFGIKNYEELPDNAKAYLKRIEEVCGAPVAIVSTGPDREETIVLHHPFA.

Residues glycine 13–lysine 19 and glycine 41–threonine 43 each bind GTP. The Proton acceptor role is filled by aspartate 14. Mg(2+) contacts are provided by aspartate 14 and glycine 41. IMP contacts are provided by residues aspartate 14 to lysine 17, asparagine 39 to histidine 42, threonine 131, arginine 145, glutamine 226, threonine 241, and arginine 305. The Proton donor role is filled by histidine 42. Serine 301–arginine 307 provides a ligand contact to substrate. Residues arginine 307, lysine 333–aspartate 335, and serine 416–glycine 418 contribute to the GTP site.

It belongs to the adenylosuccinate synthetase family. As to quaternary structure, homodimer. Mg(2+) serves as cofactor.

Its subcellular location is the cytoplasm. The catalysed reaction is IMP + L-aspartate + GTP = N(6)-(1,2-dicarboxyethyl)-AMP + GDP + phosphate + 2 H(+). It participates in purine metabolism; AMP biosynthesis via de novo pathway; AMP from IMP: step 1/2. Plays an important role in the de novo pathway of purine nucleotide biosynthesis. Catalyzes the first committed step in the biosynthesis of AMP from IMP. This chain is Adenylosuccinate synthetase, found in Neisseria meningitidis serogroup C (strain 053442).